Reading from the N-terminus, the 245-residue chain is Phosducin (245 aa).

The interval 1-70 is disordered; it reads MEKAKSQSLE…DKDSKERFSR (70 aa). The 244-residue stretch at 1–244 folds into the Phosducin domain; the sequence is MEKAKSQSLE…LEQTNMEEDM (244 aa). Composition is skewed to basic and acidic residues over residues 28–50 and 58–69; these read DWRKFKLESEDSDSVAHSKKEIL and SRDDKDSKERFS. Position 73 is a phosphoserine; by PKA (Ser73). Residues 111–245 form a thioredoxin fold region; that stretch reads YGFVYELESG…EQTNMEEDME (135 aa).

It belongs to the phosducin family. Interacts with CRX. Forms a complex with the beta and gamma subunits of the GTP-binding protein, transducin. Light-induced changes in cyclic nucleotide levels modulate the phosphorylation of this protein by cAMP kinase.

It is found in the cytoplasm. Its subcellular location is the cytosol. The protein resides in the nucleus. The protein localises to the cell projection. It localises to the cilium. It is found in the photoreceptor outer segment. Its subcellular location is the photoreceptor inner segment. Inhibits the transcriptional activation activity of the cone-rod homeobox CRX. May participate in the regulation of visual phototransduction or in the integration of photoreceptor metabolism. The protein is Phosducin (PDC) of Bos taurus (Bovine).